The primary structure comprises 209 residues: Urease accessory protein UreG (209 aa).

14–21 lines the GTP pocket; it reads GPVGSGKT.

Belongs to the SIMIBI class G3E GTPase family. UreG subfamily. As to quaternary structure, homodimer. UreD, UreF and UreG form a complex that acts as a GTP-hydrolysis-dependent molecular chaperone, activating the urease apoprotein by helping to assemble the nickel containing metallocenter of UreC. The UreE protein probably delivers the nickel.

It is found in the cytoplasm. Facilitates the functional incorporation of the urease nickel metallocenter. This process requires GTP hydrolysis, probably effectuated by UreG. The polypeptide is Urease accessory protein UreG (Rhodopseudomonas palustris (strain ATCC BAA-98 / CGA009)).